The primary structure comprises 923 residues: TBC1 domain family member 2A (923 aa).

At M1 the chain carries N-acetylmethionine. The tract at residues M1–C39 is disordered. The interval M1–E171 is interaction with CADH1. One can recognise a PH domain in the interval P47–W144. 2 disordered regions span residues F146–P166 and R232–K289. The segment at A301–P439 is interaction with RAC1. The stretch at R308–K486 forms a coiled coil. The Rab-GAP TBC domain maps to G631–G823. A coiled-coil region spans residues M870–S904. A disordered region spans residues E900–A923. Residues T914–A923 are compositionally biased toward acidic residues. S915 bears the Phosphoserine mark.

As to quaternary structure, interacts with activated RAC1 and CDH1.

Its subcellular location is the cytoplasm. It is found in the cytoplasmic vesicle. The protein localises to the cell junction. Acts as a GTPase-activating protein for RAB7A. Signal effector acting as a linker between RAC1 and RAB7A, leading to RAB7A inactivation and subsequent inhibition of cadherin degradation and reduced cell-cell adhesion. The sequence is that of TBC1 domain family member 2A (TBC1D2) from Ailuropoda melanoleuca (Giant panda).